Consider the following 437-residue polypeptide: Serine carboxypeptidase-like 10 (437 aa).

A signal peptide spans 1 to 21 (MGSTLKHLLLLLLVLIRHVDS). 3 disulfide bridges follow: cysteine 80-cysteine 327, cysteine 243-cysteine 257, and cysteine 281-cysteine 293. The N-linked (GlcNAc...) asparagine glycan is linked to asparagine 101. Serine 175 is an active-site residue. Asparagine 328 is a glycosylation site (N-linked (GlcNAc...) asparagine). The active site involves aspartate 362. The N-linked (GlcNAc...) asparagine glycan is linked to asparagine 378. The active site involves histidine 415. Residue asparagine 422 is glycosylated (N-linked (GlcNAc...) asparagine).

Belongs to the peptidase S10 family. In terms of tissue distribution, expressed in senescent leaves.

It is found in the secreted. Involved in the biosynthesis of sinapoylated anthocyanins. This chain is Serine carboxypeptidase-like 10 (SCPL10), found in Arabidopsis thaliana (Mouse-ear cress).